A 1150-amino-acid polypeptide reads, in one-letter code: ATP-dependent helicase/deoxyribonuclease subunit B (1150 aa).

8-15 (GRAGSGKS) serves as a coordination point for ATP. [4Fe-4S] cluster-binding residues include cysteine 786, cysteine 1106, cysteine 1109, and cysteine 1115.

It belongs to the helicase family. AddB/RexB type 1 subfamily. In terms of assembly, heterodimer of AddA and AddB. It depends on Mg(2+) as a cofactor. [4Fe-4S] cluster serves as cofactor.

Functionally, the heterodimer acts as both an ATP-dependent DNA helicase and an ATP-dependent, dual-direction single-stranded exonuclease. Recognizes the chi site generating a DNA molecule suitable for the initiation of homologous recombination. The AddB subunit has 5' -&gt; 3' nuclease activity but not helicase activity. This is ATP-dependent helicase/deoxyribonuclease subunit B from Clostridium botulinum (strain Langeland / NCTC 10281 / Type F).